A 432-amino-acid polypeptide reads, in one-letter code: Trigger factor (432 aa).

Residues 161–246 (DDRVTIDFVG…LKKVENMVLP (86 aa)) enclose the PPIase FKBP-type domain.

The protein belongs to the FKBP-type PPIase family. Tig subfamily.

The protein resides in the cytoplasm. It carries out the reaction [protein]-peptidylproline (omega=180) = [protein]-peptidylproline (omega=0). In terms of biological role, involved in protein export. Acts as a chaperone by maintaining the newly synthesized protein in an open conformation. Functions as a peptidyl-prolyl cis-trans isomerase. The protein is Trigger factor of Haemophilus influenzae (strain PittGG).